A 384-amino-acid polypeptide reads, in one-letter code: 8-amino-7-oxononanoate synthase (384 aa).

Arg21 lines the substrate pocket. 108–109 serves as a coordination point for pyridoxal 5'-phosphate; that stretch reads GF. His133 contributes to the substrate binding site. Ser179, His207, and Thr233 together coordinate pyridoxal 5'-phosphate. Lys236 bears the N6-(pyridoxal phosphate)lysine mark. Thr352 lines the substrate pocket.

This sequence belongs to the class-II pyridoxal-phosphate-dependent aminotransferase family. BioF subfamily. Homodimer. Pyridoxal 5'-phosphate serves as cofactor.

It catalyses the reaction 6-carboxyhexanoyl-[ACP] + L-alanine + H(+) = (8S)-8-amino-7-oxononanoate + holo-[ACP] + CO2. It functions in the pathway cofactor biosynthesis; biotin biosynthesis. Functionally, catalyzes the decarboxylative condensation of pimeloyl-[acyl-carrier protein] and L-alanine to produce 8-amino-7-oxononanoate (AON), [acyl-carrier protein], and carbon dioxide. The chain is 8-amino-7-oxononanoate synthase from Escherichia coli O157:H7.